A 319-amino-acid chain; its full sequence is Putative peptide permease protein BOV_A0351 (319 aa).

Transmembrane regions (helical) follow at residues 9–29, 102–122, 138–158, 182–202, 242–262, and 284–304; these read LLIG…LLQL, LLLM…TGII, LALL…LYVF, LLRH…ALIM, LPVV…AIFI, and YPVI…VNIL. The ABC transmembrane type-1 domain maps to 98-305; the sequence is IGPTLLLMAA…ACVIIVNILT (208 aa).

It belongs to the binding-protein-dependent transport system permease family. As to quaternary structure, the complex is composed of two ATP-binding proteins (BOV_A0347 and BOV_A0348), two transmembrane proteins (BOV_A0350 and BOV_A0351) and a solute-binding protein (BOV_A0352).

It localises to the cell inner membrane. Its function is as follows. Probably part of an ABC transporter complex that could be involved in peptide import. Probably responsible for the translocation of the substrate across the membrane. In Brucella ovis (strain ATCC 25840 / 63/290 / NCTC 10512), this protein is Putative peptide permease protein BOV_A0351.